Here is a 144-residue protein sequence, read N- to C-terminus: Ethylene-responsive transcription factor ERF019 (144 aa).

A DNA-binding region (AP2/ERF) is located at residues 13–72 (KYKGIRRRKWGKWVSEIRVPGTRDRLWLGSFSTAEGAAVAHDVAFFCLHQPDSLESLNFP).

The protein belongs to the AP2/ERF transcription factor family. ERF subfamily.

The protein localises to the nucleus. Its function is as follows. Probably acts as a transcriptional activator. Binds to the GCC-box pathogenesis-related promoter element. May be involved in the regulation of gene expression by stress factors and by components of stress signal transduction pathways. This Arabidopsis thaliana (Mouse-ear cress) protein is Ethylene-responsive transcription factor ERF019 (ERF019).